We begin with the raw amino-acid sequence, 435 residues long: 3-ketoacyl-CoA thiolase (435 aa).

Cys98 acts as the Acyl-thioester intermediate in catalysis. Residues His391 and Cys421 each act as proton acceptor in the active site.

Belongs to the thiolase-like superfamily. Thiolase family. As to quaternary structure, heterotetramer of two alpha chains (FadJ) and two beta chains (FadI).

The protein localises to the cytoplasm. The catalysed reaction is an acyl-CoA + acetyl-CoA = a 3-oxoacyl-CoA + CoA. The protein operates within lipid metabolism; fatty acid beta-oxidation. Catalyzes the final step of fatty acid oxidation in which acetyl-CoA is released and the CoA ester of a fatty acid two carbons shorter is formed. The protein is 3-ketoacyl-CoA thiolase of Vibrio parahaemolyticus serotype O3:K6 (strain RIMD 2210633).